Reading from the N-terminus, the 418-residue chain is Staphyloferrin B transporter (418 aa).

A run of 10 helical transmembrane segments spans residues 19–39 (FIAIAGLTVLVPLLPIYMASL), 49–69 (LWSGIAIAAPAVTTMIASPIW), 88–108 (GLAVCLFLMALCTTPLQFVLV), 163–183 (ILGFSALLMSIAVITFIVCIF), 222–242 (FIIVGVLANFAMYGMLTALSP), 257–277 (VIGFLQSAFWTASILSAPLWG), 287–307 (SVYIFATIACGCSAILQGLAT), 317–337 (ILQGLTYSALIQSVMFVVVNA), 353–373 (MLVVGQIIGSLSGAAITSYTT), and 377–397 (TFIVMGVVFAVSSLFLICSTI).

This sequence belongs to the major facilitator superfamily.

The protein localises to the cell membrane. Functionally, involved in staphyloferrin B secretion. The sequence is that of Staphyloferrin B transporter from Staphylococcus aureus (strain NCTC 8325 / PS 47).